The chain runs to 728 residues: Fatty acid oxidation complex subunit alpha (728 aa).

Residues 1–189 (MLYQSETIQV…KNGLIDAVVP (189 aa)) form an enoyl-CoA hydratase/isomerase region. Residue D296 coordinates substrate. The interval 311–728 (TIPEYAAVLG…TIAVSTGKTA (418 aa)) is 3-hydroxyacyl-CoA dehydrogenase. Residues M324, D343, 400 to 402 (VVE), K407, and S429 each bind NAD(+). Residue H450 is the For 3-hydroxyacyl-CoA dehydrogenase activity of the active site. Residue N453 participates in NAD(+) binding. Residues N500 and Y660 each contribute to the substrate site.

This sequence in the N-terminal section; belongs to the enoyl-CoA hydratase/isomerase family. In the C-terminal section; belongs to the 3-hydroxyacyl-CoA dehydrogenase family. Heterotetramer of two alpha chains (FadB) and two beta chains (FadA).

It carries out the reaction a (3S)-3-hydroxyacyl-CoA + NAD(+) = a 3-oxoacyl-CoA + NADH + H(+). The catalysed reaction is a (3S)-3-hydroxyacyl-CoA = a (2E)-enoyl-CoA + H2O. It catalyses the reaction a 4-saturated-(3S)-3-hydroxyacyl-CoA = a (3E)-enoyl-CoA + H2O. The enzyme catalyses (3S)-3-hydroxybutanoyl-CoA = (3R)-3-hydroxybutanoyl-CoA. It carries out the reaction a (3Z)-enoyl-CoA = a 4-saturated (2E)-enoyl-CoA. The catalysed reaction is a (3E)-enoyl-CoA = a 4-saturated (2E)-enoyl-CoA. It participates in lipid metabolism; fatty acid beta-oxidation. Functionally, involved in the aerobic and anaerobic degradation of long-chain fatty acids via beta-oxidation cycle. Catalyzes the formation of 3-oxoacyl-CoA from enoyl-CoA via L-3-hydroxyacyl-CoA. It can also use D-3-hydroxyacyl-CoA and cis-3-enoyl-CoA as substrate. The protein is Fatty acid oxidation complex subunit alpha of Photorhabdus laumondii subsp. laumondii (strain DSM 15139 / CIP 105565 / TT01) (Photorhabdus luminescens subsp. laumondii).